A 254-amino-acid polypeptide reads, in one-letter code: Probable transcriptional regulatory protein Cyan7425_4347 (254 aa).

This sequence belongs to the TACO1 family.

The protein resides in the cytoplasm. This chain is Probable transcriptional regulatory protein Cyan7425_4347, found in Cyanothece sp. (strain PCC 7425 / ATCC 29141).